Consider the following 141-residue polypeptide: Guanyl-specific ribonuclease Sa3 (141 aa).

A signal peptide (or 43) is located at residues 1–36 (MRIPPRLVALAGAAAVAATLIAGPVAAAAPASHAVA). Residues cysteine 52 and cysteine 141 are joined by a disulfide bond. Catalysis depends on glutamate 99, which acts as the Proton acceptor. Catalysis depends on histidine 130, which acts as the Proton donor.

This sequence belongs to the ribonuclease N1/T1 family.

The protein resides in the secreted. It catalyses the reaction [RNA] containing guanosine + H2O = an [RNA fragment]-3'-guanosine-3'-phosphate + a 5'-hydroxy-ribonucleotide-3'-[RNA fragment].. This chain is Guanyl-specific ribonuclease Sa3 (rnaSA3), found in Kitasatospora aureofaciens (Streptomyces aureofaciens).